Reading from the N-terminus, the 556-residue chain is Formate--tetrahydrofolate ligase (556 aa).

ATP is bound at residue 65–72; sequence TPAGEGKS.

It belongs to the formate--tetrahydrofolate ligase family.

The enzyme catalyses (6S)-5,6,7,8-tetrahydrofolate + formate + ATP = (6R)-10-formyltetrahydrofolate + ADP + phosphate. It functions in the pathway one-carbon metabolism; tetrahydrofolate interconversion. This is Formate--tetrahydrofolate ligase from Clostridium novyi (strain NT).